The primary structure comprises 294 residues: MEIEGYEKIIEAGKIASKVREEAVKLIXPGVKLLEVAEFVENRIRELGGEPAFPCNISINEIAAHYTPKLNDNLEFKDDDVVKLDLGAHVDGYIADTAITVDLSNSYKDLVKASEDALYTVIKEINPPMNIGEMGKIIQEVIESYGYKPISNLSGHVMHRYELHTGISIPNVYERTNQYIDVGDLVAIEPFATDGFGMVKDGNLGNIYKFLAKRPIRLPQARKLLDVISKNYPYLPFAERWVLKNESERLALNSLIRASCIYGYPILKERENGIVGQAEHTILITENGVEITTK.

H65 contributes to the substrate binding site. A divalent metal cation is bound by residues D85, D96, and H156. A substrate-binding site is contributed by H164. Residues E189 and E279 each contribute to the a divalent metal cation site.

It belongs to the peptidase M24A family. Methionine aminopeptidase archaeal type 2 subfamily. Monomer. Co(2+) serves as cofactor. It depends on Zn(2+) as a cofactor. The cofactor is Mn(2+). Fe(2+) is required as a cofactor.

The catalysed reaction is Release of N-terminal amino acids, preferentially methionine, from peptides and arylamides.. Functionally, removes the N-terminal methionine from nascent proteins. The N-terminal methionine is often cleaved when the second residue in the primary sequence is small and uncharged (Met-Ala-, Cys, Gly, Pro, Ser, Thr, or Val). The protein is Methionine aminopeptidase of Methanocaldococcus jannaschii (strain ATCC 43067 / DSM 2661 / JAL-1 / JCM 10045 / NBRC 100440) (Methanococcus jannaschii).